Consider the following 240-residue polypeptide: 2,3,4,5-tetrahydropyridine-2,6-dicarboxylate N-acetyltransferase (240 aa).

It belongs to the transferase hexapeptide repeat family. DapH subfamily.

The catalysed reaction is (S)-2,3,4,5-tetrahydrodipicolinate + acetyl-CoA + H2O = L-2-acetamido-6-oxoheptanedioate + CoA. It participates in amino-acid biosynthesis; L-lysine biosynthesis via DAP pathway; LL-2,6-diaminopimelate from (S)-tetrahydrodipicolinate (acetylase route): step 1/3. Functionally, catalyzes the transfer of an acetyl group from acetyl-CoA to tetrahydrodipicolinate. The sequence is that of 2,3,4,5-tetrahydropyridine-2,6-dicarboxylate N-acetyltransferase from Bacillus anthracis (strain A0248).